Reading from the N-terminus, the 711-residue chain is Mitochondrial intermediate peptidase (711 aa).

Residues 1 to 33 constitute a mitochondrion transit peptide; sequence MLLAAGARYARRLCGRGAAAALQGRTGRSCARD. Lys-124 carries the post-translational modification N6-acetyllysine. Residue His-493 coordinates Zn(2+). The active site involves Glu-494. Zn(2+)-binding residues include His-497 and His-500.

Belongs to the peptidase M3 family. Monomer. Zn(2+) is required as a cofactor.

It localises to the mitochondrion matrix. The catalysed reaction is Release of an N-terminal octapeptide as second stage of processing of some proteins imported into the mitochondrion.. With respect to regulation, activity is divalent cation-dependent. It is stimulated by manganese, magnesium or calcium ions and reversibly inhibited by zinc, cobalt and iron. Its function is as follows. Cleaves proteins, imported into the mitochondrion, to their mature size. The protein is Mitochondrial intermediate peptidase (Mipep) of Mus musculus (Mouse).